The following is a 344-amino-acid chain: Heat-inducible transcription repressor HrcA (344 aa).

The protein belongs to the HrcA family.

In terms of biological role, negative regulator of class I heat shock genes (grpE-dnaK-dnaJ and groELS operons). Prevents heat-shock induction of these operons. The chain is Heat-inducible transcription repressor HrcA from Moorella thermoacetica (strain ATCC 39073 / JCM 9320).